A 276-amino-acid polypeptide reads, in one-letter code: Undecaprenyl-diphosphatase (276 aa).

8 helical membrane passes run M1–V21, A40–F60, V93–L113, L120–L140, I154–I174, F199–A219, V227–L247, and F255–V275.

The protein belongs to the UppP family.

It localises to the cell inner membrane. It catalyses the reaction di-trans,octa-cis-undecaprenyl diphosphate + H2O = di-trans,octa-cis-undecaprenyl phosphate + phosphate + H(+). In terms of biological role, catalyzes the dephosphorylation of undecaprenyl diphosphate (UPP). Confers resistance to bacitracin. The polypeptide is Undecaprenyl-diphosphatase (Desulforapulum autotrophicum (strain ATCC 43914 / DSM 3382 / VKM B-1955 / HRM2) (Desulfobacterium autotrophicum)).